The sequence spans 347 residues: FK506-binding protein-like (347 aa).

Residues 1–24 (METSPISPMNEKNTAQPQQREENA) form a disordered region. Residue T3 is modified to Phosphothreonine. TPR repeat units lie at residues 208–241 (AKEEHRRGTELFRAGNPQGAARCYGRALRLLLTL), 250–283 (TTLYANLAACQLLLGHPQLAAQSCDRVLEREPGH), and 284–317 (LKALYRRGVARAALGDLEKATADFKKVLAVDPKN).

As to quaternary structure, forms a ternary complex with CDKN1A/p21 and HSP90AB1/Hsp90.

Functionally, may be involved in response to X-ray. Regulates p21 protein stability by binding to Hsp90 and p21. In Mus musculus (Mouse), this protein is FK506-binding protein-like (Fkbpl).